Here is a 397-residue protein sequence, read N- to C-terminus: Acetate kinase (397 aa).

Position 8 (N8) interacts with Mg(2+). Residue K15 participates in ATP binding. Substrate is bound at residue R89. Residue D146 is the Proton donor/acceptor of the active site. ATP is bound by residues 206 to 210 (HLGNG), 281 to 283 (DLR), and 329 to 333 (GIGEN). Residue E382 coordinates Mg(2+).

This sequence belongs to the acetokinase family. Homodimer. Mg(2+) serves as cofactor. The cofactor is Mn(2+).

The protein localises to the cytoplasm. It carries out the reaction acetate + ATP = acetyl phosphate + ADP. It participates in metabolic intermediate biosynthesis; acetyl-CoA biosynthesis; acetyl-CoA from acetate: step 1/2. Catalyzes the formation of acetyl phosphate from acetate and ATP. Can also catalyze the reverse reaction. The polypeptide is Acetate kinase (Bacillus cytotoxicus (strain DSM 22905 / CIP 110041 / 391-98 / NVH 391-98)).